The chain runs to 426 residues: Proline--tRNA ligase (426 aa).

This sequence belongs to the class-II aminoacyl-tRNA synthetase family. ProS type 2 subfamily. As to quaternary structure, homodimer.

Its subcellular location is the cytoplasm. It catalyses the reaction tRNA(Pro) + L-proline + ATP = L-prolyl-tRNA(Pro) + AMP + diphosphate. Catalyzes the attachment of proline to tRNA(Pro) in a two-step reaction: proline is first activated by ATP to form Pro-AMP and then transferred to the acceptor end of tRNA(Pro). The polypeptide is Proline--tRNA ligase (Ehrlichia ruminantium (strain Gardel)).